The chain runs to 184 residues: Elongation factor P (184 aa).

This sequence belongs to the elongation factor P family.

The protein localises to the cytoplasm. It functions in the pathway protein biosynthesis; polypeptide chain elongation. In terms of biological role, involved in peptide bond synthesis. Stimulates efficient translation and peptide-bond synthesis on native or reconstituted 70S ribosomes in vitro. Probably functions indirectly by altering the affinity of the ribosome for aminoacyl-tRNA, thus increasing their reactivity as acceptors for peptidyl transferase. This Verminephrobacter eiseniae (strain EF01-2) protein is Elongation factor P.